Consider the following 58-residue polypeptide: Preprotein translocase subunit SecG (58 aa).

The Cytoplasmic segment spans residues 1-33; sequence MARRKKYEGLNPFVAAGLIKFSEEGEMERIKLS. Residues 34 to 55 traverse the membrane as a helical segment; it reads PKAAIAVSAAIIAALIIINLLL. The Extracellular portion of the chain corresponds to 56-58; the sequence is PPL.

Belongs to the SEC61-beta family. Component of the protein translocase complex. Heterotrimer consisting of alpha (SecY), beta (SecG) and gamma (SecE) subunits. Can form oligomers of the heterotrimer.

Its subcellular location is the cell membrane. Its function is as follows. Involved in protein export. The function of the beta subunit is unknown, but it may be involved in stabilization of the trimeric complex. The chain is Preprotein translocase subunit SecG from Pyrobaculum arsenaticum (strain DSM 13514 / JCM 11321 / PZ6).